The following is a 382-amino-acid chain: Caspase-1-B (382 aa).

The propeptide occupies 1–98 (MTAQLNKVRK…HEHAPSPIQE (98 aa)). Residues histidine 216 and cysteine 270 contribute to the active site. The propeptide occupies 283-292 (DVAPAPLEDD).

The protein belongs to the peptidase C14A family. Heterotetramer that consists of two anti-parallel arranged heterodimers, each one formed by a 20 kDa (Caspase-1 subunit p20) and a 10 kDa (Caspase-1 subunit p10) subunit. In terms of assembly, heterotetramer that consists of two anti-parallel arranged heterodimers, each one formed by a 20 kDa (Caspase-1 subunit p20) and a 10 kDa (Caspase-1 subunit p10) subunit. Can form a heterodimer with isoform epsilon which then has an inhibitory effect. In terms of processing, the two subunits are derived from the precursor sequence by an autocatalytic mechanism.

It localises to the cytoplasm. The protein localises to the cell membrane. The enzyme catalyses Strict requirement for an Asp residue at position P1 and has a preferred cleavage sequence of Tyr-Val-Ala-Asp-|-.. In terms of biological role, thiol protease involved in a variety of inflammatory processes by proteolytically cleaving other proteins, such as the precursors of the inflammatory cytokines interleukin-1 beta (IL1B) and interleukin 18 (IL18) as well as the pyroptosis inducer Gasdermin-D (GSDMD), into active mature peptides. Plays a key role in cell immunity as an inflammatory response initiator: once activated through formation of an inflammasome complex, it initiates a pro-inflammatory response through the cleavage of the two inflammatory cytokines IL1B and IL18, releasing the mature cytokines which are involved in a variety of inflammatory processes. Cleaves a tetrapeptide after an Asp residue at position P1. Also initiates pyroptosis, a programmed lytic cell death pathway, through cleavage of GSDMD. The chain is Caspase-1-B (casp1-b) from Xenopus laevis (African clawed frog).